We begin with the raw amino-acid sequence, 816 residues long: Endo-acting ulvan lyase (816 aa).

The N-terminal stretch at 1–23 (MGTSVRRISVVLMMLFGTNFCWS) is a signal peptide.

It belongs to the polysaccharide lyase family.

It is found in the cell surface. The protein localises to the periplasm. Its function is as follows. Ulvan lyase involved in ulvan degradation. Ulvan is the main polysaccharide component of the Ulvales (green seaweed) cell wall. It is composed of disaccharide building blocks comprising 3-sulfated rhamnose (Rha3S) linked to D-glucuronic acid (GlcA), L-iduronic acid (IduA), or D-xylose (Xyl). Ulvan lyase catalyzes the endolytic cleavage of the glycosidic bond between Rha3S and the uronic acids GlcA or IduA, producing oligosaccharides that have unsaturated 4-deoxy-L-threo-hex-4-enopyranosiduronic acid (deltaUA) at the non-reducing end. This results eventually in the degradation of the ulvan polysaccharide into deltaUA-Rha3S disaccharides and deltaUA-Rha3S-Xyl-Rha3S tetrasaccharides. The sequence is that of Endo-acting ulvan lyase from Formosa agariphila (strain DSM 15362 / KCTC 12365 / LMG 23005 / KMM 3901 / M-2Alg 35-1).